The following is a 113-amino-acid chain: UPF0122 protein PEPE_0845 (113 aa).

This sequence belongs to the UPF0122 family.

In terms of biological role, might take part in the signal recognition particle (SRP) pathway. This is inferred from the conservation of its genetic proximity to ftsY/ffh. May be a regulatory protein. This Pediococcus pentosaceus (strain ATCC 25745 / CCUG 21536 / LMG 10740 / 183-1w) protein is UPF0122 protein PEPE_0845.